The chain runs to 90 residues: uncharacterized protein (90 aa).

The interval 1–26 (MFKRSVSRLFCAPAPAPAPRKQPGGR) is disordered. The stretch at 33–66 (NLNQSVKKQLNHLEVLERIKKQRKEQKNNRNQVD) forms a coiled coil.

This is an uncharacterized protein from Dictyostelium discoideum (Social amoeba).